Reading from the N-terminus, the 208-residue chain is FMN-dependent NADH:quinone oxidoreductase (208 aa).

FMN contacts are provided by residues serine 9, 15-17, 96-99, and 140-143; these read SVS, MYNF, and TRGG.

This sequence belongs to the azoreductase type 1 family. In terms of assembly, homodimer. It depends on FMN as a cofactor.

The catalysed reaction is 2 a quinone + NADH + H(+) = 2 a 1,4-benzosemiquinone + NAD(+). It catalyses the reaction N,N-dimethyl-1,4-phenylenediamine + anthranilate + 2 NAD(+) = 2-(4-dimethylaminophenyl)diazenylbenzoate + 2 NADH + 2 H(+). In terms of biological role, quinone reductase that provides resistance to thiol-specific stress caused by electrophilic quinones. Also exhibits azoreductase activity. Catalyzes the reductive cleavage of the azo bond in aromatic azo compounds to the corresponding amines. This is FMN-dependent NADH:quinone oxidoreductase from Azospirillum brasilense.